The chain runs to 356 residues: GTPase Obg (356 aa).

The Obg domain maps to 1-159 (MKFIDRVKIH…RWLRLELKLL (159 aa)). The OBG-type G domain maps to 160-331 (ADVGLLGMPN…LVAEVARELE (172 aa)). GTP contacts are provided by residues 166 to 173 (GMPNAGKS), 191 to 195 (FTTLV), 213 to 216 (DIPG), 283 to 286 (SKID), and 312 to 314 (SAV). Residues serine 173 and threonine 193 each contribute to the Mg(2+) site.

This sequence belongs to the TRAFAC class OBG-HflX-like GTPase superfamily. OBG GTPase family. In terms of assembly, monomer. Mg(2+) is required as a cofactor.

It is found in the cytoplasm. Its function is as follows. An essential GTPase which binds GTP, GDP and possibly (p)ppGpp with moderate affinity, with high nucleotide exchange rates and a fairly low GTP hydrolysis rate. Plays a role in control of the cell cycle, stress response, ribosome biogenesis and in those bacteria that undergo differentiation, in morphogenesis control. The sequence is that of GTPase Obg from Syntrophotalea carbinolica (strain DSM 2380 / NBRC 103641 / GraBd1) (Pelobacter carbinolicus).